The primary structure comprises 146 residues: 3-dehydroquinate dehydratase (146 aa).

Residue Y24 is the Proton acceptor of the active site. N75, H81, and D88 together coordinate substrate. The active-site Proton donor is H101. Residues 102–103 and R112 contribute to the substrate site; that span reads LS.

Belongs to the type-II 3-dehydroquinase family. As to quaternary structure, homododecamer.

It carries out the reaction 3-dehydroquinate = 3-dehydroshikimate + H2O. Its pathway is metabolic intermediate biosynthesis; chorismate biosynthesis; chorismate from D-erythrose 4-phosphate and phosphoenolpyruvate: step 3/7. Catalyzes a trans-dehydration via an enolate intermediate. The sequence is that of 3-dehydroquinate dehydratase from Maricaulis maris (strain MCS10) (Caulobacter maris).